The following is a 277-amino-acid chain: MTTDSLALDFKSATLYAIRVVLHDADLDRLTAALDQRMADAGSFFENEPVVVDASRVDDPIDWPALLAALRGHNLPPIGVVAEGANLAAAQAAGLAAVELSTPPARPAPAVETAPPNDAATPVPAVPAAALETGASATTGNAPAEPAPAEPAAPAAAPQPPAVPAPASALVITKPLRSGQRVYARHTDLVVIGMVSQGAEVIADGNVHVYGPLRGKAMAGARGDTSARIFTTQLDAELLAVAGVYRVVEDKLDSTLHNQPALVYLDGETLRVEALKR.

The tract at residues 137–164 (ATTGNAPAEPAPAEPAAPAAAPQPPAVP) is disordered. Over residues 145–164 (EPAPAEPAAPAAAPQPPAVP) the composition is skewed to pro residues.

This sequence belongs to the MinC family. In terms of assembly, interacts with MinD and FtsZ.

In terms of biological role, cell division inhibitor that blocks the formation of polar Z ring septums. Rapidly oscillates between the poles of the cell to destabilize FtsZ filaments that have formed before they mature into polar Z rings. Prevents FtsZ polymerization. The sequence is that of Probable septum site-determining protein MinC from Bordetella petrii (strain ATCC BAA-461 / DSM 12804 / CCUG 43448).